A 120-amino-acid polypeptide reads, in one-letter code: MNKNHLSKRVRLLKINEFFFVFQKPQRIKVHSMTLFSRSNKLNFPRIGLAISKKYIKHSHERNRIKRHVRETFRTHKHNLLSLDFILTVHSKQILSLTNNNLIEELKKLWYHYQNYQQKS.

The protein belongs to the RnpA family. In terms of assembly, consists of a catalytic RNA component (M1 or rnpB) and a protein subunit.

The catalysed reaction is Endonucleolytic cleavage of RNA, removing 5'-extranucleotides from tRNA precursor.. Functionally, RNaseP catalyzes the removal of the 5'-leader sequence from pre-tRNA to produce the mature 5'-terminus. It can also cleave other RNA substrates such as 4.5S RNA. The protein component plays an auxiliary but essential role in vivo by binding to the 5'-leader sequence and broadening the substrate specificity of the ribozyme. This is Ribonuclease P protein component from Blochmanniella floridana.